An 85-amino-acid chain; its full sequence is Small ribosomal subunit protein bS18c (85 aa).

It belongs to the bacterial ribosomal protein bS18 family. In terms of assembly, part of the 30S ribosomal subunit.

The protein localises to the plastid. The protein resides in the chloroplast. The protein is Small ribosomal subunit protein bS18c of Zygnema circumcarinatum (Green alga).